The chain runs to 230 residues: Porin OmpL (230 aa).

An N-terminal signal peptide occupies residues 1–20 (MKKINAIILLSSLTSASVFA).

The protein belongs to the oligogalacturonate-specific porin KdgM (TC 1.B.35) family. OmpL subfamily.

It is found in the cell outer membrane. Functionally, outer membrane channel protein that allows an efficient diffusion of low-molecular-weight solutes such as small sugars and tetraglycine. However, the specific substrate recognized by the OmpL channel is unknown. This Escherichia coli (strain K12) protein is Porin OmpL (ompL).